The chain runs to 562 residues: Long-chain-fatty-acid--CoA ligase (562 aa).

213–224 (YTGGTTGVAKGA) provides a ligand contact to ATP.

This sequence belongs to the ATP-dependent AMP-binding enzyme family. The cofactor is Mg(2+).

It is found in the membrane. It catalyses the reaction a long-chain fatty acid + ATP + CoA = a long-chain fatty acyl-CoA + AMP + diphosphate. The protein operates within lipid metabolism; fatty acid beta-oxidation. Functionally, catalyzes the esterification, concomitant with transport, of exogenous long-chain fatty acids into metabolically active CoA thioesters for subsequent degradation or incorporation into phospholipids. This is Long-chain-fatty-acid--CoA ligase (fadD) from Yersinia pestis.